A 1362-amino-acid polypeptide reads, in one-letter code: DNA-directed RNA polymerase subunit beta (1362 aa).

The protein belongs to the RNA polymerase beta chain family. As to quaternary structure, the RNAP catalytic core consists of 2 alpha, 1 beta, 1 beta' and 1 omega subunit. When a sigma factor is associated with the core the holoenzyme is formed, which can initiate transcription.

It carries out the reaction RNA(n) + a ribonucleoside 5'-triphosphate = RNA(n+1) + diphosphate. Functionally, DNA-dependent RNA polymerase catalyzes the transcription of DNA into RNA using the four ribonucleoside triphosphates as substrates. This Acinetobacter baumannii (strain AB307-0294) protein is DNA-directed RNA polymerase subunit beta.